Consider the following 650-residue polypeptide: Chaperone protein HtpG (650 aa).

Residues 1–356 (MSTRVETLEF…THDLSLNISR (356 aa)) form an a; substrate-binding region. A disordered region spans residues 222–245 (AKDRDSNDDGTAESGAGAENAGDR). The interval 357 to 572 (EILQQDRRIQ…TFDMTPALEK (216 aa)) is b. The interval 573–650 (MYRAMGHEMP…LLAERLAEAL (78 aa)) is c.

Belongs to the heat shock protein 90 family. Homodimer.

The protein resides in the cytoplasm. Its function is as follows. Molecular chaperone. Has ATPase activity. The protein is Chaperone protein HtpG of Frankia casuarinae (strain DSM 45818 / CECT 9043 / HFP020203 / CcI3).